An 875-amino-acid polypeptide reads, in one-letter code: Alanine--tRNA ligase (875 aa).

Residues His-564, His-568, Cys-666, and His-670 each contribute to the Zn(2+) site.

It belongs to the class-II aminoacyl-tRNA synthetase family. As to quaternary structure, homotetramer. Requires Zn(2+) as cofactor.

It localises to the cytoplasm. It carries out the reaction tRNA(Ala) + L-alanine + ATP = L-alanyl-tRNA(Ala) + AMP + diphosphate. Functionally, catalyzes the attachment of alanine to tRNA(Ala) in a two-step reaction: alanine is first activated by ATP to form Ala-AMP and then transferred to the acceptor end of tRNA(Ala). Also edits incorrectly charged Ser-tRNA(Ala) and Gly-tRNA(Ala) via its editing domain. The protein is Alanine--tRNA ligase of Sodalis glossinidius (strain morsitans).